The chain runs to 249 residues: Pleckstrin homology domain-containing family F member 2 (249 aa).

The residue at position 16 (Ser16) is a Phosphoserine. The PH domain occupies 35–131 (VLIGEGVLTK…WMNHINKCVT (97 aa)). N6-acetyllysine is present on Lys44. The FYVE-type zinc finger occupies 152-212 (DSEATVCMRC…ICDFCYDLLS (61 aa)). 8 residues coordinate Zn(2+): Cys158, Cys161, Cys175, Cys178, Cys183, Cys186, Cys204, and Cys207. The segment covering 221–233 (PARSDSYSQSLKS) has biased composition (polar residues). Positions 221–249 (PARSDSYSQSLKSPLNDMSDDDDDDDSSD) are disordered. Residues 238 to 249 (MSDDDDDDDSSD) are compositionally biased toward acidic residues. Ser239 and Ser248 each carry phosphoserine.

In terms of assembly, may interact with EEA1. Expressed in placenta, ovary and small intestine, as well as in heart and pancreas. Also expressed in peripheral blood mononuclear cells and dendritic cells.

It localises to the early endosome membrane. It is found in the endoplasmic reticulum. Its function is as follows. May play a role in early endosome fusion upstream of RAB5, hence regulating receptor trafficking and fluid-phase transport. Enhances cellular sensitivity to TNF-induced apoptosis. This chain is Pleckstrin homology domain-containing family F member 2 (PLEKHF2), found in Homo sapiens (Human).